A 704-amino-acid chain; its full sequence is Polyribonucleotide nucleotidyltransferase (704 aa).

Mg(2+) is bound by residues D490 and D496. The region spanning 557-616 is the KH domain; sequence PKIEMIQIKPAKIKDVIGKGGETINSIIDETGVKIDIDQDGNVSIASSDAEMIKKAIKII. The S1 motif domain occupies 626-694; sequence GQVYLAKVVR…KQGRVNVSRK (69 aa).

It belongs to the polyribonucleotide nucleotidyltransferase family. It depends on Mg(2+) as a cofactor.

It localises to the cytoplasm. It catalyses the reaction RNA(n+1) + phosphate = RNA(n) + a ribonucleoside 5'-diphosphate. Involved in mRNA degradation. Catalyzes the phosphorolysis of single-stranded polyribonucleotides processively in the 3'- to 5'-direction. This chain is Polyribonucleotide nucleotidyltransferase, found in Enterococcus faecalis (strain ATCC 700802 / V583).